A 431-amino-acid chain; its full sequence is Serine hydroxymethyltransferase (431 aa).

(6S)-5,6,7,8-tetrahydrofolate contacts are provided by residues Leu128 and 132-134; that span reads GHL. Position 237 is an N6-(pyridoxal phosphate)lysine (Lys237).

It belongs to the SHMT family. As to quaternary structure, homodimer. Requires pyridoxal 5'-phosphate as cofactor.

It is found in the cytoplasm. It carries out the reaction (6R)-5,10-methylene-5,6,7,8-tetrahydrofolate + glycine + H2O = (6S)-5,6,7,8-tetrahydrofolate + L-serine. The protein operates within one-carbon metabolism; tetrahydrofolate interconversion. It functions in the pathway amino-acid biosynthesis; glycine biosynthesis; glycine from L-serine: step 1/1. Its function is as follows. Catalyzes the reversible interconversion of serine and glycine with tetrahydrofolate (THF) serving as the one-carbon carrier. This reaction serves as the major source of one-carbon groups required for the biosynthesis of purines, thymidylate, methionine, and other important biomolecules. Also exhibits THF-independent aldolase activity toward beta-hydroxyamino acids, producing glycine and aldehydes, via a retro-aldol mechanism. The chain is Serine hydroxymethyltransferase from Ruegeria sp. (strain TM1040) (Silicibacter sp.).